The following is a 243-amino-acid chain: Proteasome subunit beta (243 aa).

Residues 1–46 (MFNPNNGSEFARNRARLDDTPNPYEPEVGSLPEGDRSQAGSDTVNK) are disordered. Residues 1–48 (MFNPNNGSEFARNRARLDDTPNPYEPEVGSLPEGDRSQAGSDTVNKTG) constitute a propeptide, removed in mature form; by autocatalysis. The Nucleophile role is filled by T49.

Belongs to the peptidase T1B family. As to quaternary structure, the 20S proteasome core is composed of 14 alpha and 14 beta subunits that assemble into four stacked heptameric rings, resulting in a barrel-shaped structure. The two inner rings, each composed of seven catalytic beta subunits, are sandwiched by two outer rings, each composed of seven alpha subunits. The catalytic chamber with the active sites is on the inside of the barrel. Has a gated structure, the ends of the cylinder being occluded by the N-termini of the alpha-subunits. Is capped at one or both ends by the proteasome regulatory ATPase, PAN.

It is found in the cytoplasm. The enzyme catalyses Cleavage of peptide bonds with very broad specificity.. With respect to regulation, the formation of the proteasomal ATPase PAN-20S proteasome complex, via the docking of the C-termini of PAN into the intersubunit pockets in the alpha-rings, triggers opening of the gate for substrate entry. Interconversion between the open-gate and close-gate conformations leads to a dynamic regulation of the 20S proteasome proteolysis activity. In terms of biological role, component of the proteasome core, a large protease complex with broad specificity involved in protein degradation. The protein is Proteasome subunit beta of Halobacterium salinarum (strain ATCC 29341 / DSM 671 / R1).